A 70-amino-acid polypeptide reads, in one-letter code: Exodeoxyribonuclease 7 small subunit (70 aa).

The protein belongs to the XseB family. In terms of assembly, heterooligomer composed of large and small subunits.

Its subcellular location is the cytoplasm. It carries out the reaction Exonucleolytic cleavage in either 5'- to 3'- or 3'- to 5'-direction to yield nucleoside 5'-phosphates.. In terms of biological role, bidirectionally degrades single-stranded DNA into large acid-insoluble oligonucleotides, which are then degraded further into small acid-soluble oligonucleotides. The polypeptide is Exodeoxyribonuclease 7 small subunit (Streptococcus gordonii (strain Challis / ATCC 35105 / BCRC 15272 / CH1 / DL1 / V288)).